A 610-amino-acid polypeptide reads, in one-letter code: Elongation factor 4 (610 aa).

One can recognise a tr-type G domain in the interval 7-189 (SRIRNFSIIA…AIVQRIPPPK (183 aa)). Residues 19–24 (DHGKST) and 136–139 (NKID) each bind GTP.

It belongs to the TRAFAC class translation factor GTPase superfamily. Classic translation factor GTPase family. LepA subfamily.

Its subcellular location is the cell inner membrane. It carries out the reaction GTP + H2O = GDP + phosphate + H(+). Its function is as follows. Required for accurate and efficient protein synthesis under certain stress conditions. May act as a fidelity factor of the translation reaction, by catalyzing a one-codon backward translocation of tRNAs on improperly translocated ribosomes. Back-translocation proceeds from a post-translocation (POST) complex to a pre-translocation (PRE) complex, thus giving elongation factor G a second chance to translocate the tRNAs correctly. Binds to ribosomes in a GTP-dependent manner. In Thermus thermophilus (strain ATCC BAA-163 / DSM 7039 / HB27), this protein is Elongation factor 4.